A 366-amino-acid chain; its full sequence is Bacteriochlorophyll a protein (366 aa).

The bacteriochlorophyll a site is built by H111, H146, H290, H297, and H298.

As to quaternary structure, homotrimer. Each subunit contains 7 molecules of bacteriochlorophyll a.

Functionally, intermediary in the transfer of excitation energy from the chlorophyll to the reaction centers. The chain is Bacteriochlorophyll a protein (fmoA) from Chlorobaculum tepidum (strain ATCC 49652 / DSM 12025 / NBRC 103806 / TLS) (Chlorobium tepidum).